The following is a 164-amino-acid chain: UPF0304 protein YfbU (164 aa).

The protein belongs to the UPF0304 family.

The chain is UPF0304 protein YfbU from Escherichia coli O139:H28 (strain E24377A / ETEC).